The chain runs to 539 residues: Phosphoenolpyruvate carboxykinase (ATP) (539 aa).

Substrate is bound by residues Arg64, Tyr206, and Lys212. Residues Lys212, His231, and 247–255 (GLSGTGKTT) each bind ATP. Residues Lys212 and His231 each contribute to the Mn(2+) site. Asp268 provides a ligand contact to Mn(2+). Residues Glu296, Arg332, 448 to 449 (RI), and Thr454 contribute to the ATP site. Residue Arg332 participates in substrate binding.

It belongs to the phosphoenolpyruvate carboxykinase (ATP) family. Monomer. The cofactor is Mn(2+).

It is found in the cytoplasm. The catalysed reaction is oxaloacetate + ATP = phosphoenolpyruvate + ADP + CO2. It functions in the pathway carbohydrate biosynthesis; gluconeogenesis. Functionally, involved in the gluconeogenesis. Catalyzes the conversion of oxaloacetate (OAA) to phosphoenolpyruvate (PEP) through direct phosphoryl transfer between the nucleoside triphosphate and OAA. The chain is Phosphoenolpyruvate carboxykinase (ATP) from Edwardsiella ictaluri (strain 93-146).